The primary structure comprises 202 residues: Snake venom metalloproteinase fibrolase (202 aa).

Residues 6-202 (RYIELVIVAD…HNPQCILNQP (197 aa)) form the Peptidase M12B domain. Glu9 serves as a coordination point for Ca(2+). Residue Asn25 is glycosylated (N-linked (GlcNAc...) asparagine). A Ca(2+)-binding site is contributed by Asp93. Disulfide bonds link Cys117/Cys197, Cys157/Cys181, and Cys159/Cys164. Position 142 (His142) interacts with Zn(2+). Residue Glu143 is part of the active site. His146 and His152 together coordinate Zn(2+). Residues Cys197 and Asn200 each contribute to the Ca(2+) site.

It belongs to the venom metalloproteinase (M12B) family. P-I subfamily. In terms of assembly, monomer. It depends on Zn(2+) as a cofactor. In terms of processing, glycosylated. As to expression, expressed by the venom gland.

Its subcellular location is the secreted. It carries out the reaction Hydrolysis of 14-Ala-|-Leu-15 in insulin B chain and 413-Lys-|-Leu-414 in alpha-chain of fibrinogen.. Its activity is regulated as follows. Activated by calcium and magnesium ions. Inhibited by EDTA, DTT and L-cysteine. Activity is not affected by PMSF or heparin. Has fibrino(geno)lytic activity on the alpha and beta chains of fibrinogen (FGA and FGB). Inhibits human ADP- and collagen-induced platelet aggregation on platelet-rich plasma but does not affect the thrombin-induced aggregation of rabbit washed platelets. Slightly degrades plasminogen. The polypeptide is Snake venom metalloproteinase fibrolase (Macrovipera lebetinus (Levantine viper)).